A 523-amino-acid chain; its full sequence is Probable FAD synthase (523 aa).

Residues Ala20–Ile111 form a molybdenum cofactor biosynthesis protein-like region. Residues Gln332–Lys489 are FAD synthase.

The protein in the N-terminal section; belongs to the MoaB/Mog family. In the C-terminal section; belongs to the PAPS reductase family. FAD1 subfamily. It depends on Mg(2+) as a cofactor.

The catalysed reaction is FMN + ATP + H(+) = FAD + diphosphate. Its pathway is cofactor biosynthesis; FAD biosynthesis; FAD from FMN: step 1/1. Functionally, catalyzes the adenylation of flavin mononucleotide (FMN) to form flavin adenine dinucleotide (FAD) coenzyme. This is Probable FAD synthase from Caenorhabditis briggsae.